We begin with the raw amino-acid sequence, 452 residues long: Growth/differentiation factor 6 (452 aa).

Positions 1–22 (MDTPRVLLWAIFLISFLWDLPG) are cleaved as a signal peptide. A propeptide spanning residues 23-332 (FQQASISSSS…LPSPGRRRRR (310 aa)) is cleaved from the precursor. The interval 29 to 93 (SSSSSTELDS…QEPPGRGPRV (65 aa)) is disordered. Basic and acidic residues-rich tracts occupy residues 37 to 46 (DSTKDVENRK) and 58 to 75 (AEGR…ELRR). An N-linked (GlcNAc...) asparagine glycan is attached at Asn115. Disordered stretches follow at residues 244–267 (RDSG…LGFG) and 301–348 (AEAA…KKSR). A compositionally biased stretch (low complexity) spans 301-317 (AEAAGAEGSWPAPSGAP). Residues 327-348 (GRRRRRTALSSRHGKRHGKKSR) are compositionally biased toward basic residues. Disulfide bonds link Cys351/Cys417, Cys380/Cys449, and Cys384/Cys451.

This sequence belongs to the TGF-beta family. As to quaternary structure, homodimer; disulfide-linked.

It is found in the secreted. In terms of biological role, growth factor that controls proliferation and cellular differentiation in the retina and bone formation. Plays a key role in regulating apoptosis during retinal development. Establishes dorsal-ventral positional information in the retina and controls the formation of the retinotectal map. Required for normal formation of bones and joints in the limbs, skull, digits and axial skeleton. Plays a key role in establishing boundaries between skeletal elements during development. Regulation of GDF6 expression seems to be a mechanism for evolving species-specific changes in skeletal structures. Seems to positively regulate differentiation of chondrogenic tissue through the growth factor receptors subunits BMPR1A, BMPR1B, BMPR2 and ACVR2A, leading to the activation of SMAD1-SMAD5-SMAD8 complex. The regulation of chondrogenic differentiation is inhibited by NOG. Also involved in the induction of adipogenesis from mesenchymal stem cells. This mechanism acts through the growth factor receptors subunits BMPR1A, BMPR2 and ACVR2A and the activation of SMAD1-SMAD5-SMAD8 complex and MAPK14/p38. This Rattus norvegicus (Rat) protein is Growth/differentiation factor 6 (Gdf6).